The sequence spans 376 residues: N-acetyldiaminopimelate deacetylase (376 aa).

The active site involves Asp69. The active-site Proton acceptor is Glu128.

The protein belongs to the peptidase M20A family. N-acetyldiaminopimelate deacetylase subfamily.

It carries out the reaction N-acetyl-(2S,6S)-2,6-diaminopimelate + H2O = (2S,6S)-2,6-diaminopimelate + acetate. It participates in amino-acid biosynthesis; L-lysine biosynthesis via DAP pathway; LL-2,6-diaminopimelate from (S)-tetrahydrodipicolinate (acetylase route): step 3/3. Catalyzes the conversion of N-acetyl-diaminopimelate to diaminopimelate and acetate. This Bacillus cereus (strain ATCC 14579 / DSM 31 / CCUG 7414 / JCM 2152 / NBRC 15305 / NCIMB 9373 / NCTC 2599 / NRRL B-3711) protein is N-acetyldiaminopimelate deacetylase.